We begin with the raw amino-acid sequence, 205 residues long: Golgi apparatus membrane protein TVP23 homolog B (205 aa).

Methionine 1 bears the N-acetylmethionine mark. Residues 1 to 21 (MLQQDSNDDTEDVSLFDAEEE) form a disordered region. 4 helical membrane passes run 34–53 (PVAS…VYLL), 54–72 (CELL…ILLL), 126–146 (IFWL…FSAL), and 152–172 (KWLA…YGYI).

This sequence belongs to the TVP23 family.

The protein localises to the membrane. The sequence is that of Golgi apparatus membrane protein TVP23 homolog B (TVP23B) from Pongo abelii (Sumatran orangutan).